The following is a 54-amino-acid chain: Ribulose bisphosphate carboxylase large chain (54 aa).

A propeptide spanning residues 1 to 2 (MS) is cleaved from the precursor. Residue P3 is modified to N-acetylproline. Position 14 is an N6,N6,N6-trimethyllysine (K14).

Belongs to the RuBisCO large chain family. Type I subfamily. As to quaternary structure, heterohexadecamer of 8 large chains and 8 small chains.

It localises to the plastid. The protein resides in the chloroplast. It catalyses the reaction 2 (2R)-3-phosphoglycerate + 2 H(+) = D-ribulose 1,5-bisphosphate + CO2 + H2O. The catalysed reaction is D-ribulose 1,5-bisphosphate + O2 = 2-phosphoglycolate + (2R)-3-phosphoglycerate + 2 H(+). Its function is as follows. RuBisCO catalyzes two reactions: the carboxylation of D-ribulose 1,5-bisphosphate, the primary event in carbon dioxide fixation, as well as the oxidative fragmentation of the pentose substrate in the photorespiration process. Both reactions occur simultaneously and in competition at the same active site. In Colletia hystrix (Crucifixion thorn), this protein is Ribulose bisphosphate carboxylase large chain (rbcL).